The primary structure comprises 389 residues: NADH-dependent butanol dehydrogenase A (389 aa).

This sequence belongs to the iron-containing alcohol dehydrogenase family. As to quaternary structure, homodimer.

The protein operates within alcohol metabolism; butanol biosynthesis. The sequence is that of NADH-dependent butanol dehydrogenase A (bdhA) from Clostridium acetobutylicum (strain ATCC 824 / DSM 792 / JCM 1419 / IAM 19013 / LMG 5710 / NBRC 13948 / NRRL B-527 / VKM B-1787 / 2291 / W).